The primary structure comprises 397 residues: Subtilisin-like protease 3 (397 aa).

The signal sequence occupies residues 1 to 19 (MGCIKVISVFLAAIAAVDA). Residues 20 to 116 (RAFFHNRGGS…VEHDRVVKLA (97 aa)) constitute a propeptide that is removed on maturation. Residues 35-116 (SYIVVMKDGV…VEHDRVVKLA (82 aa)) enclose the Inhibitor I9 domain. The region spanning 126 to 397 (TWGLGRVSHR…NRLLYNGSGQ (272 aa)) is the Peptidase S8 domain. Residues aspartate 158 and histidine 189 each act as charge relay system in the active site. Asparagine 250 carries an N-linked (GlcNAc...) asparagine glycan. The Charge relay system role is filled by serine 344. Asparagine 393 is a glycosylation site (N-linked (GlcNAc...) asparagine).

This sequence belongs to the peptidase S8 family.

It localises to the secreted. Secreted subtilisin-like serine protease with keratinolytic activity that contributes to pathogenicity. The protein is Subtilisin-like protease 3 (SUB3) of Trichophyton tonsurans (Scalp ringworm fungus).